The chain runs to 261 residues: tRNA pseudouridine synthase A (261 aa).

The active-site Nucleophile is Asp-51. A substrate-binding site is contributed by Tyr-109.

It belongs to the tRNA pseudouridine synthase TruA family. Homodimer.

The catalysed reaction is uridine(38/39/40) in tRNA = pseudouridine(38/39/40) in tRNA. Its function is as follows. Formation of pseudouridine at positions 38, 39 and 40 in the anticodon stem and loop of transfer RNAs. This chain is tRNA pseudouridine synthase A, found in Idiomarina loihiensis (strain ATCC BAA-735 / DSM 15497 / L2-TR).